A 235-amino-acid chain; its full sequence is RNA pyrophosphohydrolase (235 aa).

The Nudix hydrolase domain maps to 6–149 (GFRPNVGIIL…KRGVYEMALT (144 aa)). The Nudix box signature appears at 38–59 (GGIDRGENPEQAMFRELHEEVG). The disordered stretch occupies residues 184-235 (ANQSGEPGSFPAAGGIPSYATRPGAPFELPPGATFEPDPQTSFGVNAPTKKT).

Belongs to the Nudix hydrolase family. RppH subfamily. A divalent metal cation is required as a cofactor.

Its function is as follows. Accelerates the degradation of transcripts by removing pyrophosphate from the 5'-end of triphosphorylated RNA, leading to a more labile monophosphorylated state that can stimulate subsequent ribonuclease cleavage. The chain is RNA pyrophosphohydrolase from Polaromonas naphthalenivorans (strain CJ2).